Consider the following 393-residue polypeptide: MAQENAAFSPGSEEPPRRRGRQRYVEKDGRCNVQQGNVRETYRYLTDLFTTLVDLQWRLSLLFFVLAYALTWLFFGAIWWLIAYGRGDLEHLEDTAWTPCVNNLNGFVAAFLFSIETETTIGYGHRVITDQCPEGIVLLLLQAILGSMVNAFMVGCMFVKISQPNKRAATLVFSSHAVVSLRDGRLCLMFRVGDLRSSHIVEASIRAKLIRSRQTLEGEFIPLHQTDLSVGFDTGDDRLFLVSPLVISHEIDAASPFWEASRRALERDDFEIVVILEGMVEATGMTCQARSSYLVDEVLWGHRFTSVLTLEDGFYEVDYASFHETFEVPTPSCSARELAEAAARLDAHLYWSIPSRLDEKVEEEGAGEGAGAGDGADKEHNGCLPPPESESKV.

The disordered stretch occupies residues 1–23; sequence MAQENAAFSPGSEEPPRRRGRQR. Topologically, residues 1–57 are cytoplasmic; that stretch reads MAQENAAFSPGSEEPPRRRGRQRYVEKDGRCNVQQGNVRETYRYLTDLFTTLVDLQW. Residues 58-82 traverse the membrane as a helical segment; sequence RLSLLFFVLAYALTWLFFGAIWWLI. Residues 83–106 are Extracellular-facing; that stretch reads AYGRGDLEHLEDTAWTPCVNNLNG. An intramembrane region (helical; Pore-forming) is located at residues 107–118; it reads FVAAFLFSIETE. The pore-forming intramembrane region spans 119 to 125; that stretch reads TTIGYGH. Positions 120–125 match the Selectivity filter motif; it reads TIGYGH. At 126–134 the chain is on the extracellular side; that stretch reads RVITDQCPE. Residues 135 to 156 traverse the membrane as a helical segment; that stretch reads GIVLLLLQAILGSMVNAFMVGC. Residues 157–393 are Cytoplasmic-facing; that stretch reads MFVKISQPNK…LPPPESESKV (237 aa). Residues 360 to 393 form a disordered region; that stretch reads KVEEEGAGEGAGAGDGADKEHNGCLPPPESESKV. Pro residues predominate over residues 384–393; that stretch reads LPPPESESKV. The PDZ-binding signature appears at 390–393; the sequence is ESKV.

The protein belongs to the inward rectifier-type potassium channel (TC 1.A.2.1) family. KCNJ9 subfamily. Associates with KCNJ3/GIRK1 to form a G-protein-activated heteromultimer pore-forming unit. Interacts (via PDZ-binding motif) with SNX27 (via PDZ domain); the interaction is required when endocytosed to prevent degradation in lysosomes and promote recycling to the plasma membrane. Expressed mainly in the brain, some expression in the skeletal muscle.

The protein localises to the membrane. It catalyses the reaction K(+)(in) = K(+)(out). Functionally, inward rectifier potassium channels are characterized by a greater tendency to allow potassium to flow into the cell rather than out of it. Their voltage dependence is regulated by the concentration of extracellular potassium; as external potassium is raised, the voltage range of the channel opening shifts to more positive voltages. The inward rectification is mainly due to the blockage of outward current by internal magnesium. This receptor is controlled by G proteins. Unable to produce channel activity when expressed alone. Forms a functional channel in association with KCNJ3/GIRK1. The chain is G protein-activated inward rectifier potassium channel 3 (Kcnj9) from Mus musculus (Mouse).